Consider the following 477-residue polypeptide: Bifunctional protein HldE (477 aa).

Residues 1-318 (MKVTLPEFER…ENAVRGRADT (318 aa)) are ribokinase. N6-acetyllysine is present on Lys179. 195-198 (NLSE) is an ATP binding site. Asp264 is a catalytic residue. A cytidylyltransferase region spans residues 344 to 477 (MTNGVFDILH…IKKIQQDKKG (134 aa)).

This sequence in the N-terminal section; belongs to the carbohydrate kinase PfkB family. In the C-terminal section; belongs to the cytidylyltransferase family. In terms of assembly, homodimer.

The enzyme catalyses D-glycero-beta-D-manno-heptose 7-phosphate + ATP = D-glycero-beta-D-manno-heptose 1,7-bisphosphate + ADP + H(+). It carries out the reaction D-glycero-beta-D-manno-heptose 1-phosphate + ATP + H(+) = ADP-D-glycero-beta-D-manno-heptose + diphosphate. It participates in nucleotide-sugar biosynthesis; ADP-L-glycero-beta-D-manno-heptose biosynthesis; ADP-L-glycero-beta-D-manno-heptose from D-glycero-beta-D-manno-heptose 7-phosphate: step 1/4. Its pathway is nucleotide-sugar biosynthesis; ADP-L-glycero-beta-D-manno-heptose biosynthesis; ADP-L-glycero-beta-D-manno-heptose from D-glycero-beta-D-manno-heptose 7-phosphate: step 3/4. Catalyzes the phosphorylation of D-glycero-D-manno-heptose 7-phosphate at the C-1 position to selectively form D-glycero-beta-D-manno-heptose-1,7-bisphosphate. In terms of biological role, catalyzes the ADP transfer from ATP to D-glycero-beta-D-manno-heptose 1-phosphate, yielding ADP-D-glycero-beta-D-manno-heptose. The sequence is that of Bifunctional protein HldE from Shigella sonnei (strain Ss046).